Reading from the N-terminus, the 317-residue chain is Pyridoxal 5'-phosphate synthase subunit PdxS (317 aa).

D-ribose 5-phosphate is bound at residue Asp47. The active-site Schiff-base intermediate with D-ribose 5-phosphate is Lys104. Gly176 contributes to the D-ribose 5-phosphate binding site. Arg188 serves as a coordination point for D-glyceraldehyde 3-phosphate. Residues Gly237 and 258–259 (GS) each bind D-ribose 5-phosphate.

This sequence belongs to the PdxS/SNZ family. As to quaternary structure, in the presence of PdxT, forms a dodecamer of heterodimers.

It catalyses the reaction aldehydo-D-ribose 5-phosphate + D-glyceraldehyde 3-phosphate + L-glutamine = pyridoxal 5'-phosphate + L-glutamate + phosphate + 3 H2O + H(+). Its pathway is cofactor biosynthesis; pyridoxal 5'-phosphate biosynthesis. Catalyzes the formation of pyridoxal 5'-phosphate from ribose 5-phosphate (RBP), glyceraldehyde 3-phosphate (G3P) and ammonia. The ammonia is provided by the PdxT subunit. Can also use ribulose 5-phosphate and dihydroxyacetone phosphate as substrates, resulting from enzyme-catalyzed isomerization of RBP and G3P, respectively. The sequence is that of Pyridoxal 5'-phosphate synthase subunit PdxS from Corynebacterium glutamicum (strain ATCC 13032 / DSM 20300 / JCM 1318 / BCRC 11384 / CCUG 27702 / LMG 3730 / NBRC 12168 / NCIMB 10025 / NRRL B-2784 / 534).